Here is an 893-residue protein sequence, read N- to C-terminus: Serine/threonine-protein kinase PLK4 (893 aa).

A Protein kinase domain is found at 12 to 265 (FRVGNLLGKG…LSSVLDHPFM (254 aa)). ATP-binding positions include 18–26 (LGKGSFAGV) and K41. N6-acetyllysine occurs at positions 45 and 46. D136 (proton acceptor) is an active-site residue. A compositionally biased stretch (polar residues) spans 349-358 (NQEQETSNSG). The interval 349-393 (NQEQETSNSGRGRVIQEAEERPHSRYLRRAHSSDRSETSHGQSRV) is disordered. Residues 362-371 (VIQEAEERPH) are compositionally biased toward basic and acidic residues. A phosphoserine mark is found at S403 and S588. The Cryptic POLO box 1 (CPB1) domain maps to 509-622 (TLRSITSPLT…SRFVQLVRSK (114 aa)). The 114-residue stretch at 623–736 (SPKITYFTRY…GRRPSSTSSP (114 aa)) folds into the Cryptic POLO box 2 (CPB2) domain. The tract at residues 730–749 (PSSTSSPKALTPPPPVDPNY) is disordered. The POLO box domain maps to 809–887 (QLLKSVFVKN…LSSILLMFSN (79 aa)).

Belongs to the protein kinase superfamily. Ser/Thr protein kinase family. CDC5/Polo subfamily. As to quaternary structure, homodimer. Interacts with CEP152 (via N-terminus). Interacts with CEP78; this interaction may be important for proper PLK4 localization to the centriole and PLK4-induced overduplication of centrioles. Interacts with CEP131. Interacts simultaneously with TENT5C and CEP192. Interacts with TENT5C; this interaction leads to the TENT5C recruitment in the centrosome. Interacts with CEP85; this interaction may be important in cell migration and centriole assembly. In terms of processing, ubiquitinated; leading to its degradation by the proteasome. Post-translationally, tyrosine-phosphorylated by TEC. Acetylation by KAT2A and KAT2B impairs kinase activity by shifting the kinase to an inactive conformation.

It is found in the cytoplasm. The protein resides in the cytoskeleton. Its subcellular location is the microtubule organizing center. It localises to the centrosome. The protein localises to the centriole. It is found in the nucleus. The protein resides in the nucleolus. Its subcellular location is the cleavage furrow. The enzyme catalyses L-seryl-[protein] + ATP = O-phospho-L-seryl-[protein] + ADP + H(+). It carries out the reaction L-threonyl-[protein] + ATP = O-phospho-L-threonyl-[protein] + ADP + H(+). Functionally, serine/threonine-protein kinase that plays a central role in centriole duplication. Able to trigger procentriole formation on the surface of the parental centriole cylinder, leading to the recruitment of centriole biogenesis proteins such as SASS6, CPAP, CCP110, CEP135 and gamma-tubulin. When overexpressed, it is able to induce centrosome amplification through the simultaneous generation of multiple procentrioles adjoining each parental centriole during S phase. Phosphorylates 'Ser-151' of FBXW5 during the G1/S transition, leading to inhibit FBXW5 ability to ubiquitinate SASS6. Its central role in centriole replication suggests a possible role in tumorigenesis, centrosome aberrations being frequently observed in tumors. Also involved in deuterosome-mediated centriole amplification in multiciliated that can generate more than 100 centrioles. Also involved in trophoblast differentiation by phosphorylating HAND1, leading to disrupt the interaction between HAND1 and MDFIC and activate HAND1. Phosphorylates CDC25C and CHEK2. Required for the recruitment of STIL to the centriole and for STIL-mediated centriole amplification. Phosphorylates CEP131 and PCM1 which is essential for proper organization and integrity of centriolar satellites. The polypeptide is Serine/threonine-protein kinase PLK4 (Bos taurus (Bovine)).